The sequence spans 211 residues: Transcription antitermination protein NusB (211 aa).

The protein belongs to the NusB family.

Functionally, involved in transcription antitermination. Required for transcription of ribosomal RNA (rRNA) genes. Binds specifically to the boxA antiterminator sequence of the ribosomal RNA (rrn) operons. The sequence is that of Transcription antitermination protein NusB from Gloeobacter violaceus (strain ATCC 29082 / PCC 7421).